We begin with the raw amino-acid sequence, 195 residues long: Coagulogen (195 aa).

A signal peptide spans 1 to 20 (MEKKLLGIAILFVTVVSVLA). 8 cysteine pairs are disulfide-bonded: Cys-28–Cys-188, Cys-30–Cys-115, Cys-80–Cys-182, Cys-85–Cys-141, Cys-95–Cys-189, Cys-108–Cys-161, Cys-147–Cys-191, and Cys-155–Cys-193.

This sequence belongs to the coagulin family. Coagulogen is cleaved after Arg-38 and Arg-66 by a clotting enzyme contained in the hemocyte and activated by a bacterial endotoxin (lipopolysaccharide). This cleavage releases the peptide C and leaves 2 chains of coagulin, A and B, linked by two disulfide bonds. Coagulin molecules interlink to form a gel. As to expression, hemolymph.

The protein localises to the secreted. Coagulogen is a gel-forming protein of hemolymph; it hinders the spread of invaders by immobilizing them. The sequence is that of Coagulogen from Limulus polyphemus (Atlantic horseshoe crab).